The following is a 95-amino-acid chain: uncharacterized protein (95 aa).

Residues 27 to 47 (SFGLAIIGILLIACEIILFLT) traverse the membrane as a helical segment.

The protein resides in the membrane. This is an uncharacterized protein from Homo sapiens (Human).